The sequence spans 136 residues: Magnetite biomineralization protein Mms6 (136 aa).

Residues 1–85 (MGEMEREGAT…AVGGTIWSGK (85 aa)) are Cytoplasmic-facing. A GL repeat region spans residues 86-95 (GLALGLGMGL). Residues 86 to 106 (GLALGLGMGLGAWGPLILGVV) form a helical membrane-spanning segment. The Lumenal segment spans residues 107–136 (GAGAVYAYMKSRDIEAAQSDEEVELRDALS). An MIC, self-assembles, binds magnetite, Fe(2+) and Fe(3+) region spans residues 115 to 136 (MKSRDIEAAQSDEEVELRDALS).

This sequence belongs to the magnetosome Mms6 family. In terms of assembly, full length protein oligomerizes and interacts with MamA. May undergo cleavage.

It localises to the magnetosome membrane. Promotes the formation of magnetite in Fe(2+)-rich conditions, when magnetite is not readily formed. Binds both Fe(2+) and Fe(3+). May help control the production of crystals with a specific morphology. May function with MamX, MamY amd MamZ in biomineralization. The 4 genes of this operon collectively influence magnetosome size and number. This Magnetospirillum gryphiswaldense (strain DSM 6361 / JCM 21280 / NBRC 15271 / MSR-1) protein is Magnetite biomineralization protein Mms6.